We begin with the raw amino-acid sequence, 164 residues long: UPF0225 protein Shewmr7_1921 (164 aa).

The protein belongs to the UPF0225 family.

The protein is UPF0225 protein Shewmr7_1921 of Shewanella sp. (strain MR-7).